Reading from the N-terminus, the 600-residue chain is 1,8-cineole synthase 1, chloroplastic (600 aa).

The transit peptide at 1–31 (MATLRISSALIYQNTLTHHFRLRRPHRFVCK) directs the protein to the chloroplast. Asp342 is a dimethylallyl diphosphate binding site. Positions 342 and 346 each coordinate Mg(2+). A DDXXD motif motif is present at residues 342–346 (DDIYD). Glu420, Arg484, and Asn487 together coordinate dimethylallyl diphosphate. 3 residues coordinate Mg(2+): Asn487, Thr491, and Glu495.

This sequence belongs to the terpene synthase family. Tpsb subfamily. The cofactor is Mg(2+). Mn(2+) serves as cofactor. Predominantly expressed in roots and at much lower levels in siliques. Not found in leaves, flowers or stems. Also detected in flowers in cv. Landsberg erecta. Not expressed in root apical meristem and elongation zone. Found in the vascular system of young roots and additionally in the cortex and epidermal cell layer of older roots.

It localises to the plastid. The protein resides in the chloroplast. The catalysed reaction is (2E)-geranyl diphosphate + H2O = 1,8-cineole + diphosphate. It participates in secondary metabolite biosynthesis; terpenoid biosynthesis. Functionally, involved in monoterpene (C10) biosynthesis. The major product is 1,8-cineole (52%) followed by minor amounts of sabinene (14.5%), myrcene (13.3%), (-)-(1S)-beta-pinene (7.8%), (-)-(4S)-limonene (4.0%), (E)-beta-ocimene (2.7%), alpha-terpineol (2.4%), (-)-(1S)-alpha-pinene (1.9%), terpinolene (0.8%), and (+)-alpha-thujene (0.6%). The chain is 1,8-cineole synthase 1, chloroplastic (TPS27) from Arabidopsis thaliana (Mouse-ear cress).